The sequence spans 526 residues: Organic cation/carnitine transporter 4 (526 aa).

Over 1 to 52 the chain is Cytoplasmic; that stretch reads MESPEDRNGNDVRQPLLEKIPVKKEAEGEERLCIDEMLQRYCGEFGRWQLKH. Residues 53-73 traverse the membrane as a helical segment; it reads FVLTCIAWALEAFHTMVMIFA. The Extracellular segment spans residues 74–123; it reads DQEPEWRCVGSDCRVGSLNCELDPSSWEWTAGKGSSTVSEWGLICGDKYK. A helical transmembrane segment spans residues 124-144; sequence VGLVQALFFAGCMIGAGVFGH. Topologically, residues 145 to 153 are cytoplasmic; it reads LSDSKLGRK. A helical transmembrane segment spans residues 154-174; that stretch reads GSLTVVCIINAIFGIATAFSP. Residues 175–179 lie on the Extracellular side of the membrane; sequence NYWTY. Residues 180–200 traverse the membrane as a helical segment; the sequence is VVLRFLTGFSTGGVGLTAFVL. Residue 201–208 coordinates ATP; the sequence is ATEPIGPS. At 201–214 the chain is on the cytoplasmic side; the sequence is ATEPIGPSKRGVAG. A helical transmembrane segment spans residues 215–235; sequence MSTFYFFSAGIAVLSGIAYVF. The Extracellular segment spans residues 236 to 240; that stretch reads RSWRE. Residues 241–261 traverse the membrane as a helical segment; it reads LFIVSSLPSLLFLLIVIPFIS. Topologically, residues 262-331 are cytoplasmic; that stretch reads ESPRWYLVRG…ILSPLMRMRL (70 aa). The helical transmembrane segment at 332 to 352 threads the bilayer; that stretch reads VISVAISFTVSIVYYGLSLNV. The Extracellular segment spans residues 353–360; the sequence is GNLKTNLY. A helical membrane pass occupies residues 361 to 381; that stretch reads LNVFVNAVSEMPAFAITAVLL. Residues 382-390 are Cytoplasmic-facing; the sequence is DKYGRKPLS. A helical transmembrane segment spans residues 391–411; that stretch reads IGTQWFSCVFCLVGFSVWGAG. Residues 412–418 lie on the Extracellular side of the membrane; that stretch reads PWKSVRM. A helical membrane pass occupies residues 419–439; the sequence is VSGVLGIFGMAGTYNLLFIYI. The Cytoplasmic portion of the chain corresponds to 440–451; that stretch reads AELFPTVVRNAA. A helical transmembrane segment spans residues 452–472; the sequence is LGCATQAAQMGAILAPFVVVL. The Extracellular segment spans residues 473 to 475; sequence GEE. Residues 476 to 496 traverse the membrane as a helical segment; it reads LPFGVFAVCGLVGGGLAFYLP. Topologically, residues 497–526 are cytoplasmic; it reads ETLNKPLYDTMFGMHEAESESNRERGEVIC.

This sequence belongs to the major facilitator (TC 2.A.1) superfamily. Organic cation transporter (TC 2.A.1.19) family. Mostly expressed in siliques, and, to a lower extent, in stems, leaves, flowers and siliques. Present in pollen. In the stems of secondary inflorescences present in the phloem cells and xylem parenchyma cells.

The protein localises to the vacuole membrane. Functionally, high affinity carnitine transporter involved in the active cellular uptake of carnitine. Also transports organic cations. In Arabidopsis thaliana (Mouse-ear cress), this protein is Organic cation/carnitine transporter 4 (OCT4).